Reading from the N-terminus, the 273-residue chain is Large ribosomal subunit protein uL2 (273 aa).

2 disordered regions span residues 34–54 (LEKK…TRHI) and 223–273 (VAMN…RRRK).

Belongs to the universal ribosomal protein uL2 family. As to quaternary structure, part of the 50S ribosomal subunit. Forms a bridge to the 30S subunit in the 70S ribosome.

Its function is as follows. One of the primary rRNA binding proteins. Required for association of the 30S and 50S subunits to form the 70S ribosome, for tRNA binding and peptide bond formation. It has been suggested to have peptidyltransferase activity; this is somewhat controversial. Makes several contacts with the 16S rRNA in the 70S ribosome. The protein is Large ribosomal subunit protein uL2 of Pseudomonas aeruginosa (strain LESB58).